A 486-amino-acid chain; its full sequence is Malonate-semialdehyde dehydrogenase 2 (486 aa).

Residues F154, K178, E181, R182, and S231 each contribute to the NAD(+) site. C286 serves as the catalytic Nucleophile. E386 provides a ligand contact to NAD(+).

The protein belongs to the aldehyde dehydrogenase family. IolA subfamily. In terms of assembly, homotetramer.

It carries out the reaction 3-oxopropanoate + NAD(+) + CoA + H2O = hydrogencarbonate + acetyl-CoA + NADH + H(+). The enzyme catalyses 2-methyl-3-oxopropanoate + NAD(+) + CoA + H2O = propanoyl-CoA + hydrogencarbonate + NADH + H(+). The protein operates within polyol metabolism; myo-inositol degradation into acetyl-CoA; acetyl-CoA from myo-inositol: step 7/7. Functionally, catalyzes the oxidation of malonate semialdehyde (MSA) and methylmalonate semialdehyde (MMSA) into acetyl-CoA and propanoyl-CoA, respectively. Is involved in a myo-inositol catabolic pathway. Bicarbonate, and not CO2, is the end-product of the enzymatic reaction. In Oceanobacillus iheyensis (strain DSM 14371 / CIP 107618 / JCM 11309 / KCTC 3954 / HTE831), this protein is Malonate-semialdehyde dehydrogenase 2.